Reading from the N-terminus, the 420-residue chain is Serine--tRNA ligase (420 aa).

Position 229-231 (229-231) interacts with L-serine; that stretch reads TAE. 260–262 serves as a coordination point for ATP; it reads RSE. Glu283 contacts L-serine. 347-350 contacts ATP; sequence EISS. Ser381 contacts L-serine.

Belongs to the class-II aminoacyl-tRNA synthetase family. Type-1 seryl-tRNA synthetase subfamily. In terms of assembly, homodimer. The tRNA molecule binds across the dimer.

It localises to the cytoplasm. The catalysed reaction is tRNA(Ser) + L-serine + ATP = L-seryl-tRNA(Ser) + AMP + diphosphate + H(+). It catalyses the reaction tRNA(Sec) + L-serine + ATP = L-seryl-tRNA(Sec) + AMP + diphosphate + H(+). Its pathway is aminoacyl-tRNA biosynthesis; selenocysteinyl-tRNA(Sec) biosynthesis; L-seryl-tRNA(Sec) from L-serine and tRNA(Sec): step 1/1. Catalyzes the attachment of serine to tRNA(Ser). Is also able to aminoacylate tRNA(Sec) with serine, to form the misacylated tRNA L-seryl-tRNA(Sec), which will be further converted into selenocysteinyl-tRNA(Sec). The polypeptide is Serine--tRNA ligase (Gluconobacter oxydans (strain 621H) (Gluconobacter suboxydans)).